Reading from the N-terminus, the 200-residue chain is MGITRDSRHKRSATGAKRAQYRKKRKFELGRQPSNTRIGPKRIHEVRVRGGNKKFRALRLDSGNFSWGSEGVSKKTRIIQVAYHPSNNELVRTNTLTKSAIVQIDAAPFRVWYETHYGILMGSKGKKATSTPNPKSKHVQRKHSARLGDSKVDSALETQFAAGRLYAVVSSRPGQSGRCDGYILEGEELHFYLRRMAPKK.

Disordered regions lie at residues 1 to 40 (MGIT…RIGP) and 123 to 145 (SKGK…KHSA). The segment covering 135-145 (KSKHVQRKHSA) has biased composition (basic residues).

This sequence belongs to the eukaryotic ribosomal protein eS8 family. Component of the small ribosomal subunit (SSU). Mature yeast ribosomes consist of a small (40S) and a large (60S) subunit. The 40S small subunit contains 1 molecule of ribosomal RNA (18S rRNA) and at least 33 different proteins. The large 60S subunit contains 3 rRNA molecules (25S, 5.8S and 5S rRNA) and at least 46 different proteins.

It is found in the cytoplasm. Its function is as follows. Component of the ribosome, a large ribonucleoprotein complex responsible for the synthesis of proteins in the cell. The small ribosomal subunit (SSU) binds messenger RNAs (mRNAs) and translates the encoded message by selecting cognate aminoacyl-transfer RNA (tRNA) molecules. The large subunit (LSU) contains the ribosomal catalytic site termed the peptidyl transferase center (PTC), which catalyzes the formation of peptide bonds, thereby polymerizing the amino acids delivered by tRNAs into a polypeptide chain. The nascent polypeptides leave the ribosome through a tunnel in the LSU and interact with protein factors that function in enzymatic processing, targeting, and the membrane insertion of nascent chains at the exit of the ribosomal tunnel. This Schizosaccharomyces pombe (strain 972 / ATCC 24843) (Fission yeast) protein is Small ribosomal subunit protein eS8A (rps801).